A 58-amino-acid polypeptide reads, in one-letter code: Small ribosomal subunit protein bS21 (58 aa).

The segment at Ser25–Phe58 is disordered. A compositionally biased stretch (basic and acidic residues) spans Glu32–Ser43. Basic residues predominate over residues Val44–Phe58.

This sequence belongs to the bacterial ribosomal protein bS21 family.

The polypeptide is Small ribosomal subunit protein bS21 (Oceanobacillus iheyensis (strain DSM 14371 / CIP 107618 / JCM 11309 / KCTC 3954 / HTE831)).